The primary structure comprises 150 residues: Ribonuclease H (150 aa).

The RNase H type-1 domain maps to 7 to 148 (ERPRVEIWTD…VDQLATRGRE (142 aa)). Mg(2+)-binding residues include Asp16, Glu54, Asp76, and Asp140.

Belongs to the RNase H family. Monomer. Mg(2+) serves as cofactor.

It localises to the cytoplasm. It catalyses the reaction Endonucleolytic cleavage to 5'-phosphomonoester.. Functionally, endonuclease that specifically degrades the RNA of RNA-DNA hybrids. In Gluconobacter oxydans (strain 621H) (Gluconobacter suboxydans), this protein is Ribonuclease H.